A 161-amino-acid chain; its full sequence is Methylated-DNA--protein-cysteine methyltransferase (161 aa).

Catalysis depends on cysteine 128, which acts as the Nucleophile; methyl group acceptor.

It belongs to the MGMT family.

It is found in the cytoplasm. It carries out the reaction a 6-O-methyl-2'-deoxyguanosine in DNA + L-cysteinyl-[protein] = S-methyl-L-cysteinyl-[protein] + a 2'-deoxyguanosine in DNA. The catalysed reaction is a 4-O-methyl-thymidine in DNA + L-cysteinyl-[protein] = a thymidine in DNA + S-methyl-L-cysteinyl-[protein]. Its function is as follows. Involved in the cellular defense against the biological effects of O6-methylguanine (O6-MeG) and O4-methylthymine (O4-MeT) in DNA. Repairs the methylated nucleobase in DNA by stoichiometrically transferring the methyl group to a cysteine residue in the enzyme. This is a suicide reaction: the enzyme is irreversibly inactivated. The chain is Methylated-DNA--protein-cysteine methyltransferase from Methanocaldococcus vulcanius (strain ATCC 700851 / DSM 12094 / M7) (Methanococcus vulcanius).